The chain runs to 427 residues: MTNSGEKKFQPLHAPKGIPDYVPPQSSEFLAVRTAFLDAAHNAGYEHIELPVFEDTSLFARGVGESTDVVSKEMYTFADRGGRSVTLRPEGTAGVMRAVIQHNLDRGQLPAKLAYHGPFFRYERPQAGRFRQLQQVGVEAIGVDDPALDAEVIALADRCFRSIGLDGFRLELTSLGDSTDRPAYRAKLQEFLATLPLDEETQRRAELNPLRVLDDKRPQMQEMLADAPLMKDHLSDSSREHFETVTGLLEDMGVEYTINPRMVRGLDYYTKTCFEFVHDGLGAQSGIGGGGRYDGLMAQLGGQDLSGIGFGLGVDRALLALEAEGKTASTGRRVDVFGIPMGDAAKRHMAALINELRAAGVAADMAYGNRGLKGAMKAANRAHAQLAVVIGDQELEAGTVAVKDLQLGEQHDVAVADLVTHIRRQLA.

The protein belongs to the class-II aminoacyl-tRNA synthetase family. In terms of assembly, homodimer.

It is found in the cytoplasm. It carries out the reaction tRNA(His) + L-histidine + ATP = L-histidyl-tRNA(His) + AMP + diphosphate + H(+). The sequence is that of Histidine--tRNA ligase from Corynebacterium urealyticum (strain ATCC 43042 / DSM 7109).